The sequence spans 249 residues: 1-(5-phosphoribosyl)-5-[(5-phosphoribosylamino)methylideneamino] imidazole-4-carboxamide isomerase (249 aa).

Catalysis depends on Asp-11, which acts as the Proton acceptor. The active-site Proton donor is Asp-133.

Belongs to the HisA/HisF family.

It is found in the cytoplasm. The enzyme catalyses 1-(5-phospho-beta-D-ribosyl)-5-[(5-phospho-beta-D-ribosylamino)methylideneamino]imidazole-4-carboxamide = 5-[(5-phospho-1-deoxy-D-ribulos-1-ylimino)methylamino]-1-(5-phospho-beta-D-ribosyl)imidazole-4-carboxamide. The protein operates within amino-acid biosynthesis; L-histidine biosynthesis; L-histidine from 5-phospho-alpha-D-ribose 1-diphosphate: step 4/9. This chain is 1-(5-phosphoribosyl)-5-[(5-phosphoribosylamino)methylideneamino] imidazole-4-carboxamide isomerase, found in Haemophilus influenzae (strain 86-028NP).